The following is a 771-amino-acid chain: Polyribonucleotide nucleotidyltransferase (771 aa).

Residues D487 and D493 each coordinate Mg(2+). In terms of domain architecture, KH spans 554–613 (PRIETMQIDKAKIRDVIGTGGKVIREIVATTGAKVDIDDEGLIKISSSDLDQIEAARKWI). The 69-residue stretch at 623–691 (GKIYDGKVVN…PRGKVRLSMR (69 aa)) folds into the S1 motif domain. The segment at 696–771 (ETGAELEDTR…QGHVPDFLKD (76 aa)) is disordered. Positions 702-771 (EDTRPAREPR…QGHVPDFLKD (70 aa)) are enriched in basic and acidic residues.

It belongs to the polyribonucleotide nucleotidyltransferase family. Mg(2+) serves as cofactor.

The protein resides in the cytoplasm. The enzyme catalyses RNA(n+1) + phosphate = RNA(n) + a ribonucleoside 5'-diphosphate. Its function is as follows. Involved in mRNA degradation. Catalyzes the phosphorolysis of single-stranded polyribonucleotides processively in the 3'- to 5'-direction. This chain is Polyribonucleotide nucleotidyltransferase, found in Sphingopyxis alaskensis (strain DSM 13593 / LMG 18877 / RB2256) (Sphingomonas alaskensis).